The primary structure comprises 101 residues: uncharacterized protein (101 aa).

The protein localises to the plastid. It is found in the chloroplast. This is an uncharacterized protein from Chlamydomonas reinhardtii (Chlamydomonas smithii).